Consider the following 93-residue polypeptide: MKQFMLVKTFDALFAELSDKARTRPAGSGTVAALDAGVHGIGKKILEEAGEVWLAAEHEGDEALAEEISQLLYWTQVLMVSRGLTLDDVYRKL.

Belongs to the PRA-PH family.

Its subcellular location is the cytoplasm. The enzyme catalyses 1-(5-phospho-beta-D-ribosyl)-ATP + H2O = 1-(5-phospho-beta-D-ribosyl)-5'-AMP + diphosphate + H(+). The protein operates within amino-acid biosynthesis; L-histidine biosynthesis; L-histidine from 5-phospho-alpha-D-ribose 1-diphosphate: step 2/9. This chain is Phosphoribosyl-ATP pyrophosphatase, found in Mycolicibacterium smegmatis (strain ATCC 700084 / mc(2)155) (Mycobacterium smegmatis).